The chain runs to 577 residues: F-box/TPR repeat protein pof3 (577 aa).

TPR repeat units lie at residues 6–39 (VKAI…EPNP), 41–74 (IDLF…NARN), and 76–108 (RGYL…VHKM). The region spanning 138 to 180 (ILPREVLLCILQQLNFKSIVQCMQVCKHWRDCIKKEPSLFCCL) is the F-box domain.

A part of the E3 ubiquitin ligase Skp1-Cullin-1-F-box (SCF) complex. Interacts with cul1, mcl1 and skp1.

The protein localises to the mitochondrion. The protein resides in the nucleus. Has a role in substrate recognition in the Skp1-Cullin-1/Cdc53-F-box (SCF) ubiquitin ligase complex. Required for the maintenance of telomere length and transcriptional silencing at the telomere. Also required for chromosome segregation. This is F-box/TPR repeat protein pof3 (pof3) from Schizosaccharomyces pombe (strain 972 / ATCC 24843) (Fission yeast).